We begin with the raw amino-acid sequence, 130 residues long: Large ribosomal subunit protein eL32 (130 aa).

It belongs to the eukaryotic ribosomal protein eL32 family. In terms of assembly, part of the 50S ribosomal subunit.

The sequence is that of Large ribosomal subunit protein eL32 from Pyrococcus furiosus (strain ATCC 43587 / DSM 3638 / JCM 8422 / Vc1).